Here is a 192-residue protein sequence, read N- to C-terminus: Density-regulated protein homolog (192 aa).

A disordered region spans residues 62–116 (GLEISDEPAADGDEKKKQKRGGKGSKTGAAAAQAAASGGKKKGGGPQKVTLQREP). Positions 87-99 (KTGAAAAQAAASG) are enriched in low complexity. Residues 117-176 (RGKKSVTVIKGLATFDIDLKVASKLFAQKFACGSSVTGADEIVIQGDVKDDLLDLIPEKW) form the SUI1 domain.

Belongs to the DENR family.

This Caenorhabditis elegans protein is Density-regulated protein homolog.